The sequence spans 241 residues: tRNA (guanine-N(7)-)-methyltransferase (241 aa).

The segment covering 1–10 (MTESNDTPIQ) has biased composition (polar residues). The interval 1-20 (MTESNDTPIQTEEGDERQHR) is disordered. S-adenosyl-L-methionine contacts are provided by Glu71, Glu96, Asp123, and Asp146. Residue Asp146 is part of the active site. Residues Lys150, Asp182, and 219-222 (TKFE) contribute to the substrate site.

The protein belongs to the class I-like SAM-binding methyltransferase superfamily. TrmB family.

It carries out the reaction guanosine(46) in tRNA + S-adenosyl-L-methionine = N(7)-methylguanosine(46) in tRNA + S-adenosyl-L-homocysteine. The protein operates within tRNA modification; N(7)-methylguanine-tRNA biosynthesis. Its function is as follows. Catalyzes the formation of N(7)-methylguanine at position 46 (m7G46) in tRNA. The sequence is that of tRNA (guanine-N(7)-)-methyltransferase from Pseudomonas fluorescens (strain Pf0-1).